Consider the following 212-residue polypeptide: 3-isopropylmalate dehydratase small subunit (212 aa).

This sequence belongs to the LeuD family. LeuD type 1 subfamily. As to quaternary structure, heterodimer of LeuC and LeuD.

It carries out the reaction (2R,3S)-3-isopropylmalate = (2S)-2-isopropylmalate. It functions in the pathway amino-acid biosynthesis; L-leucine biosynthesis; L-leucine from 3-methyl-2-oxobutanoate: step 2/4. Its function is as follows. Catalyzes the isomerization between 2-isopropylmalate and 3-isopropylmalate, via the formation of 2-isopropylmaleate. In Laribacter hongkongensis (strain HLHK9), this protein is 3-isopropylmalate dehydratase small subunit.